The following is a 170-amino-acid chain: Peptide deformylase (170 aa).

Fe cation is bound by residues Cys-93 and His-135. Glu-136 is an active-site residue. His-139 serves as a coordination point for Fe cation.

This sequence belongs to the polypeptide deformylase family. Fe(2+) is required as a cofactor.

It catalyses the reaction N-terminal N-formyl-L-methionyl-[peptide] + H2O = N-terminal L-methionyl-[peptide] + formate. In terms of biological role, removes the formyl group from the N-terminal Met of newly synthesized proteins. Requires at least a dipeptide for an efficient rate of reaction. N-terminal L-methionine is a prerequisite for activity but the enzyme has broad specificity at other positions. The chain is Peptide deformylase from Acidobacterium capsulatum (strain ATCC 51196 / DSM 11244 / BCRC 80197 / JCM 7670 / NBRC 15755 / NCIMB 13165 / 161).